The primary structure comprises 556 residues: Oxygen-dependent choline dehydrogenase (556 aa).

FAD is bound at residue 4–33 (DYIIIGAGSAGNVLATRLTEDPNTTVLLLE). The Proton acceptor role is filled by His473.

The protein belongs to the GMC oxidoreductase family. The cofactor is FAD.

The catalysed reaction is choline + A = betaine aldehyde + AH2. It carries out the reaction betaine aldehyde + NAD(+) + H2O = glycine betaine + NADH + 2 H(+). It participates in amine and polyamine biosynthesis; betaine biosynthesis via choline pathway; betaine aldehyde from choline (cytochrome c reductase route): step 1/1. In terms of biological role, involved in the biosynthesis of the osmoprotectant glycine betaine. Catalyzes the oxidation of choline to betaine aldehyde and betaine aldehyde to glycine betaine at the same rate. In Escherichia coli O17:K52:H18 (strain UMN026 / ExPEC), this protein is Oxygen-dependent choline dehydrogenase.